The following is a 43-amino-acid chain: Protein PsbN (43 aa).

Residues 5 to 27 form a helical membrane-spanning segment; that stretch reads ALVAISISRLLVSFTGYALYTAF.

The protein belongs to the PsbN family.

The protein localises to the plastid. Its subcellular location is the chloroplast thylakoid membrane. May play a role in photosystem I and II biogenesis. This is Protein PsbN from Bowenia serrulata (Byfield fern).